The primary structure comprises 416 residues: 3-oxoacyl-[acyl-carrier-protein] synthase 1 (416 aa).

The Ketosynthase family 3 (KS3) domain occupies 11-415 (FPSVVVTAVT…GHNVALAFGR (405 aa)). Catalysis depends on for beta-ketoacyl synthase activity residues C171, H311, and H345. Substrate is bound by residues H311 and H345.

Belongs to the thiolase-like superfamily. Beta-ketoacyl-ACP synthases family.

Its subcellular location is the cytoplasm. The enzyme catalyses an ultra-long-chain mono-unsaturated fatty acyl-[ACP] + malonyl-[ACP] + H(+) = a 3-oxo-ultra-long-chain mono-unsaturated fatty acyl-[ACP] + holo-[ACP] + CO2. It participates in lipid metabolism; mycolic acid biosynthesis. Part of the mycobacterial fatty acid elongation system FAS-II, which is involved in mycolic acid biosynthesis. Catalyzes the elongation of long chain acyl-ACP substrates by the addition of two carbons from malonyl-ACP to an acyl acceptor. Involved in the initial extension of the mycolate chain and forms monounsaturated fatty acids that averaged 40 carbons in length. The chain is 3-oxoacyl-[acyl-carrier-protein] synthase 1 (kasA) from Mycobacterium leprae (strain TN).